Consider the following 72-residue polypeptide: Large ribosomal subunit protein bL31 (72 aa).

Belongs to the bacterial ribosomal protein bL31 family. Type A subfamily. In terms of assembly, part of the 50S ribosomal subunit.

In terms of biological role, binds the 23S rRNA. The sequence is that of Large ribosomal subunit protein bL31 from Maricaulis maris (strain MCS10) (Caulobacter maris).